The sequence spans 65 residues: Large ribosomal subunit protein bL35 (65 aa).

The segment at 1 to 30 (MPKMKTNRGAAKRFRKTASGRFKSKQSHLR) is disordered. Positions 10-30 (AAKRFRKTASGRFKSKQSHLR) are enriched in basic residues.

Belongs to the bacterial ribosomal protein bL35 family.

The sequence is that of Large ribosomal subunit protein bL35 from Pseudoalteromonas atlantica (strain T6c / ATCC BAA-1087).